The primary structure comprises 474 residues: 3-isopropylmalate dehydratase large subunit (474 aa).

3 residues coordinate [4Fe-4S] cluster: C353, C414, and C417.

Belongs to the aconitase/IPM isomerase family. LeuC type 1 subfamily. Heterodimer of LeuC and LeuD. It depends on [4Fe-4S] cluster as a cofactor.

The catalysed reaction is (2R,3S)-3-isopropylmalate = (2S)-2-isopropylmalate. It functions in the pathway amino-acid biosynthesis; L-leucine biosynthesis; L-leucine from 3-methyl-2-oxobutanoate: step 2/4. Catalyzes the isomerization between 2-isopropylmalate and 3-isopropylmalate, via the formation of 2-isopropylmaleate. The chain is 3-isopropylmalate dehydratase large subunit from Pseudomonas paraeruginosa (strain DSM 24068 / PA7) (Pseudomonas aeruginosa (strain PA7)).